The chain runs to 159 residues: 2-C-methyl-D-erythritol 2,4-cyclodiphosphate synthase (159 aa).

Residues Asp10 and His12 each contribute to the a divalent metal cation site. 4-CDP-2-C-methyl-D-erythritol 2-phosphate is bound by residues Asp10–His12 and His36–Ser37. Residue His44 participates in a divalent metal cation binding. Residues Asp58–Gly60, Thr134–Glu137, Phe141, and Arg144 contribute to the 4-CDP-2-C-methyl-D-erythritol 2-phosphate site.

The protein belongs to the IspF family. Homotrimer. A divalent metal cation is required as a cofactor.

It carries out the reaction 4-CDP-2-C-methyl-D-erythritol 2-phosphate = 2-C-methyl-D-erythritol 2,4-cyclic diphosphate + CMP. It participates in isoprenoid biosynthesis; isopentenyl diphosphate biosynthesis via DXP pathway; isopentenyl diphosphate from 1-deoxy-D-xylulose 5-phosphate: step 4/6. In terms of biological role, involved in the biosynthesis of isopentenyl diphosphate (IPP) and dimethylallyl diphosphate (DMAPP), two major building blocks of isoprenoid compounds. Catalyzes the conversion of 4-diphosphocytidyl-2-C-methyl-D-erythritol 2-phosphate (CDP-ME2P) to 2-C-methyl-D-erythritol 2,4-cyclodiphosphate (ME-CPP) with a corresponding release of cytidine 5-monophosphate (CMP). This Roseobacter denitrificans (strain ATCC 33942 / OCh 114) (Erythrobacter sp. (strain OCh 114)) protein is 2-C-methyl-D-erythritol 2,4-cyclodiphosphate synthase.